The chain runs to 470 residues: Serine hydroxymethyltransferase 5 (470 aa).

Lys-244 bears the N6-(pyridoxal phosphate)lysine mark.

Belongs to the SHMT family. In terms of assembly, homotetramer. The cofactor is pyridoxal 5'-phosphate.

It localises to the cytoplasm. The enzyme catalyses (6R)-5,10-methylene-5,6,7,8-tetrahydrofolate + glycine + H2O = (6S)-5,6,7,8-tetrahydrofolate + L-serine. Its pathway is one-carbon metabolism; tetrahydrofolate interconversion. Its function is as follows. Catalyzes the interconversion of serine and glycine. The polypeptide is Serine hydroxymethyltransferase 5 (SHM5) (Arabidopsis thaliana (Mouse-ear cress)).